The chain runs to 397 residues: Phosphoglycerate kinase (397 aa).

Substrate is bound by residues 25-27 (DLN), Arg-41, 64-67 (HLGR), Arg-118, and Arg-151. Residues Lys-202, Glu-324, and 350–353 (GGDT) contribute to the ATP site.

It belongs to the phosphoglycerate kinase family. In terms of assembly, monomer.

It is found in the cytoplasm. It carries out the reaction (2R)-3-phosphoglycerate + ATP = (2R)-3-phospho-glyceroyl phosphate + ADP. Its pathway is carbohydrate degradation; glycolysis; pyruvate from D-glyceraldehyde 3-phosphate: step 2/5. In Leptothrix cholodnii (strain ATCC 51168 / LMG 8142 / SP-6) (Leptothrix discophora (strain SP-6)), this protein is Phosphoglycerate kinase.